The following is a 144-amino-acid chain: F420-non-reducing hydrogenase vhc iron-sulfur subunit D (144 aa).

This sequence belongs to the MvhD/VhuD family. The F420-non-reducing hydrogenase vhc is composed of three subunits; VhcA, VhcD and VhcG. It depends on [2Fe-2S] cluster as a cofactor.

The polypeptide is F420-non-reducing hydrogenase vhc iron-sulfur subunit D (vhcD) (Methanococcus voltae).